A 226-amino-acid chain; its full sequence is 2-C-methyl-D-erythritol 4-phosphate cytidylyltransferase (226 aa).

It belongs to the IspD/TarI cytidylyltransferase family. IspD subfamily.

The catalysed reaction is 2-C-methyl-D-erythritol 4-phosphate + CTP + H(+) = 4-CDP-2-C-methyl-D-erythritol + diphosphate. It functions in the pathway isoprenoid biosynthesis; isopentenyl diphosphate biosynthesis via DXP pathway; isopentenyl diphosphate from 1-deoxy-D-xylulose 5-phosphate: step 2/6. In terms of biological role, catalyzes the formation of 4-diphosphocytidyl-2-C-methyl-D-erythritol from CTP and 2-C-methyl-D-erythritol 4-phosphate (MEP). This chain is 2-C-methyl-D-erythritol 4-phosphate cytidylyltransferase, found in Synechococcus sp. (strain CC9902).